Here is a 257-residue protein sequence, read N- to C-terminus: Thiazole synthase (257 aa).

K95 acts as the Schiff-base intermediate with DXP in catalysis. 1-deoxy-D-xylulose 5-phosphate contacts are provided by residues G156, 182–183 (AG), and 204–205 (NT).

The protein belongs to the ThiG family. Homotetramer. Forms heterodimers with either ThiH or ThiS.

The protein resides in the cytoplasm. The catalysed reaction is [ThiS sulfur-carrier protein]-C-terminal-Gly-aminoethanethioate + 2-iminoacetate + 1-deoxy-D-xylulose 5-phosphate = [ThiS sulfur-carrier protein]-C-terminal Gly-Gly + 2-[(2R,5Z)-2-carboxy-4-methylthiazol-5(2H)-ylidene]ethyl phosphate + 2 H2O + H(+). It participates in cofactor biosynthesis; thiamine diphosphate biosynthesis. Its function is as follows. Catalyzes the rearrangement of 1-deoxy-D-xylulose 5-phosphate (DXP) to produce the thiazole phosphate moiety of thiamine. Sulfur is provided by the thiocarboxylate moiety of the carrier protein ThiS. In vitro, sulfur can be provided by H(2)S. In Fusobacterium nucleatum subsp. nucleatum (strain ATCC 25586 / DSM 15643 / BCRC 10681 / CIP 101130 / JCM 8532 / KCTC 2640 / LMG 13131 / VPI 4355), this protein is Thiazole synthase.